Reading from the N-terminus, the 326-residue chain is tRNA-modifying protein YgfZ (326 aa).

Trp-27 and Trp-189 together coordinate folate.

This sequence belongs to the tRNA-modifying YgfZ family.

It is found in the cytoplasm. Functionally, folate-binding protein involved in regulating the level of ATP-DnaA and in the modification of some tRNAs. It is probably a key factor in regulatory networks that act via tRNA modification, such as initiation of chromosomal replication. This chain is tRNA-modifying protein YgfZ, found in Escherichia coli (strain SE11).